Reading from the N-terminus, the 332-residue chain is UPF0194 membrane protein YbhG (332 aa).

The first 16 residues, 1–16 (MMKKPVVIGLAVVVLA), serve as a signal peptide directing secretion. A coiled-coil region spans residues 141–210 (RTISANDLEN…NLQDSTLIAP (70 aa)).

This sequence belongs to the UPF0194 family.

The protein localises to the periplasm. The polypeptide is UPF0194 membrane protein YbhG (ybhG) (Shigella flexneri).